Consider the following 310-residue polypeptide: Protein translocase subunit SecF (310 aa).

The next 6 helical transmembrane spans lie at 18–38 (FFTI…YRGG), 135–155 (QAVY…AFRF), 162–182 (IVSV…VILA), 188–208 (ITIV…TIVL), 240–260 (IVTS…GGEV), and 267–287 (IMII…APLI).

This sequence belongs to the SecD/SecF family. SecF subfamily. Forms a complex with SecD. Part of the essential Sec protein translocation apparatus which comprises SecA, SecYEG and auxiliary proteins SecDF. Other proteins may also be involved.

It localises to the cell inner membrane. In terms of biological role, part of the Sec protein translocase complex. Interacts with the SecYEG preprotein conducting channel. SecDF uses the proton motive force (PMF) to complete protein translocation after the ATP-dependent function of SecA. This is Protein translocase subunit SecF from Endomicrobium trichonymphae.